A 653-amino-acid chain; its full sequence is Poly [ADP-ribose] polymerase 2 (653 aa).

The region spanning S2–I36 is the SAP 1 domain. Residues N64 to T84 form a disordered region. Positions K69–R72 match the Nuclear localization signal motif. In terms of domain architecture, SAP 2 spans L91 to T125. Residues N179 to Y276 enclose the WGR domain. The PARP alpha-helical domain maps to E301–E419. The region spanning D427–R653 is the PARP catalytic domain.

The protein belongs to the ARTD/PARP family.

Its subcellular location is the nucleus. It catalyses the reaction NAD(+) + (ADP-D-ribosyl)n-acceptor = nicotinamide + (ADP-D-ribosyl)n+1-acceptor + H(+).. The catalysed reaction is L-aspartyl-[protein] + NAD(+) = 4-O-(ADP-D-ribosyl)-L-aspartyl-[protein] + nicotinamide. It carries out the reaction L-glutamyl-[protein] + NAD(+) = 5-O-(ADP-D-ribosyl)-L-glutamyl-[protein] + nicotinamide. Its function is as follows. Involved in the base excision repair (BER) pathway, by catalyzing the poly(ADP-ribosyl)ation of a limited number of acceptor proteins involved in chromatin architecture and in DNA metabolism. This modification follows DNA damages and appears as an obligatory step in a detection/signaling pathway leading to the reparation of DNA strand breaks. This Zea mays (Maize) protein is Poly [ADP-ribose] polymerase 2 (PARP2).